Reading from the N-terminus, the 198-residue chain is Glycerol-3-phosphate acyltransferase (198 aa).

Transmembrane regions (helical) follow at residues 2 to 22 (IIVI…TGYL), 55 to 75 (MITQ…CMLI), 88 to 108 (YLSI…FLGF), 118 to 138 (VGAF…VYFV), and 162 to 182 (IALR…GLLI).

Belongs to the PlsY family. Probably interacts with PlsX.

The protein localises to the cell membrane. It carries out the reaction an acyl phosphate + sn-glycerol 3-phosphate = a 1-acyl-sn-glycero-3-phosphate + phosphate. Its pathway is lipid metabolism; phospholipid metabolism. In terms of biological role, catalyzes the transfer of an acyl group from acyl-phosphate (acyl-PO(4)) to glycerol-3-phosphate (G3P) to form lysophosphatidic acid (LPA). This enzyme utilizes acyl-phosphate as fatty acyl donor, but not acyl-CoA or acyl-ACP. The sequence is that of Glycerol-3-phosphate acyltransferase from Clostridium acetobutylicum (strain ATCC 824 / DSM 792 / JCM 1419 / IAM 19013 / LMG 5710 / NBRC 13948 / NRRL B-527 / VKM B-1787 / 2291 / W).